A 198-amino-acid chain; its full sequence is Protein LKAAEAR1 (198 aa).

Residues 1-47 (MPTLGVKGARERDKNSASGAGAGAGAGAGAGEKHRKGPRTTDPPKTG) are disordered. The segment covering 20-30 (AGAGAGAGAGA) has biased composition (gly residues).

The sequence is that of Protein LKAAEAR1 (Lkaaear1) from Mus musculus (Mouse).